Consider the following 189-residue polypeptide: Elongation factor P (189 aa).

Lysine 34 is modified (N6-(3,6-diaminohexanoyl)-5-hydroxylysine).

Belongs to the elongation factor P family. In terms of processing, may be beta-lysylated on the epsilon-amino group of Lys-34 by the combined action of EpmA and EpmB, and then hydroxylated on the C5 position of the same residue by EpmC (if this protein is present). Lysylation is critical for the stimulatory effect of EF-P on peptide-bond formation. The lysylation moiety may extend toward the peptidyltransferase center and stabilize the terminal 3-CCA end of the tRNA. Hydroxylation of the C5 position on Lys-34 may allow additional potential stabilizing hydrogen-bond interactions with the P-tRNA.

The protein resides in the cytoplasm. It participates in protein biosynthesis; polypeptide chain elongation. Its function is as follows. Involved in peptide bond synthesis. Alleviates ribosome stalling that occurs when 3 or more consecutive Pro residues or the sequence PPG is present in a protein, possibly by augmenting the peptidyl transferase activity of the ribosome. Modification of Lys-34 is required for alleviation. In Francisella philomiragia subsp. philomiragia (strain ATCC 25017 / CCUG 19701 / FSC 153 / O#319-036), this protein is Elongation factor P.